We begin with the raw amino-acid sequence, 235 residues long: Ribosomal RNA small subunit methyltransferase G (235 aa).

Residues G74, L79, 124 to 125 (AE), and R142 contribute to the S-adenosyl-L-methionine site. The segment at 211–235 (RRRAAKPGRNKSGRTARSRGRTGRR) is disordered. A compositionally biased stretch (basic residues) spans 213–235 (RAAKPGRNKSGRTARSRGRTGRR).

It belongs to the methyltransferase superfamily. RNA methyltransferase RsmG family.

Its subcellular location is the cytoplasm. Its function is as follows. Specifically methylates the N7 position of guanine in position 518 of 16S rRNA. In Mycolicibacterium smegmatis (strain ATCC 700084 / mc(2)155) (Mycobacterium smegmatis), this protein is Ribosomal RNA small subunit methyltransferase G.